We begin with the raw amino-acid sequence, 245 residues long: Homeobox protein goosecoid (245 aa).

The segment at residues 150–209 is a DNA-binding region (homeobox); it reads KRRHRTIFTDEQLEALENLFQETKYPDVGTREQLARKVHLREEKVEVWFKNRRAKWRRQK. The tract at residues 203–245 is disordered; sequence AKWRRQKRSSSEESENAQKWNKASKTSPEKRQEDGKSDLDSDS. The span at 219 to 228 shows a compositional bias: polar residues; that stretch reads AQKWNKASKT. Positions 229–245 are enriched in basic and acidic residues; it reads SPEKRQEDGKSDLDSDS.

It belongs to the paired homeobox family. Bicoid subfamily.

It is found in the nucleus. In terms of biological role, involved in the development of the organizer region in the gastrula (Hensen node in chicken). This is Homeobox protein goosecoid (GSC) from Gallus gallus (Chicken).